The primary structure comprises 136 residues: Small ribosomal subunit protein uS19 (136 aa).

This sequence belongs to the universal ribosomal protein uS19 family.

Its function is as follows. Protein S19 forms a complex with S13 that binds strongly to the 16S ribosomal RNA. The protein is Small ribosomal subunit protein uS19 (rps19) of Methanothermobacter thermautotrophicus (strain ATCC 29096 / DSM 1053 / JCM 10044 / NBRC 100330 / Delta H) (Methanobacterium thermoautotrophicum).